A 275-amino-acid polypeptide reads, in one-letter code: Transmembrane protein 45B (275 aa).

7 consecutive transmembrane segments (helical) span residues His-7–Leu-27, Ile-47–Val-67, Leu-94–Leu-114, Val-116–Val-136, Ile-146–Ile-166, Leu-180–Gly-200, and Leu-212–Val-232. A phosphoserine mark is found at Ser-270 and Ser-272.

Belongs to the TMEM45 family. In terms of assembly, (Microbial infection) Interacts with sindbis virus nsP1 and nsP4; these interactions lead to viral RNA replication inhibition. (Microbial infection) Interacts with chikungunya virus nsP1 and nsP4; these interactions lead to viral RNA replication inhibition.

Its subcellular location is the endosome membrane. The protein localises to the lysosome membrane. It localises to the golgi apparatus. It is found in the trans-Golgi network membrane. Its function is as follows. Plays a role in innate immunity. Mechanistically, promotes alphaviruses RNA degradation by interacting with the viral polymerase nsP4 and the mRNA-capping enzyme nsP1 and thereby interfering with the interaction between viral RNA and nsP1. The sequence is that of Transmembrane protein 45B (TMEM45B) from Homo sapiens (Human).